Here is a 156-residue protein sequence, read N- to C-terminus: Small ribosomal subunit protein uS7 (156 aa).

It belongs to the universal ribosomal protein uS7 family. As to quaternary structure, part of the 30S ribosomal subunit. Contacts proteins S9 and S11.

Functionally, one of the primary rRNA binding proteins, it binds directly to 16S rRNA where it nucleates assembly of the head domain of the 30S subunit. Is located at the subunit interface close to the decoding center, probably blocks exit of the E-site tRNA. This is Small ribosomal subunit protein uS7 from Staphylococcus aureus (strain USA300).